A 361-amino-acid chain; its full sequence is Versatile peroxidase VPL2 (361 aa).

The N-terminal stretch at 1–22 (MSFKTLSALALALGAAVQFASA) is a signal peptide. A propeptide spanning residues 23 to 30 (AVPLVQKR) is cleaved from the precursor. Disulfide bonds link C33/C45, C44/C308, C64/C144, and C272/C337. Positions 66 and 70 each coordinate Mn(2+). The Proton acceptor role is filled by H77. Ca(2+) contacts are provided by D78, G90, D92, and S94. N126 is a glycosylation site (N-linked (GlcNAc...) asparagine). The active-site Tryptophan radical intermediate is W194. H199 serves as a coordination point for heme b. S200 serves as a coordination point for Ca(2+). 203–207 (AADKV) is a binding site for heme b. Mn(2+) is bound at residue D205. Ca(2+) contacts are provided by D217, T219, V222, and D224.

Belongs to the peroxidase family. Ligninase subfamily. The cofactor is heme b. Ca(2+) serves as cofactor.

The protein localises to the secreted. It carries out the reaction 1-(4-hydroxy-3-methoxyphenyl)-2-(2-methoxyphenoxy)propane-1,3-diol + H2O2 = guaiacol + vanillin + glycolaldehyde + H2O. It catalyses the reaction 2 Mn(2+) + H2O2 + 2 H(+) = 2 Mn(3+) + 2 H2O. Functionally, a versatile ligninolytic peroxidase that combines the substrate specificity characteristics of the two other ligninolytic peroxidases, manganese peroxidase and lignin peroxidase. In Pleurotus eryngii (Boletus of the steppes), this protein is Versatile peroxidase VPL2 (vpl2).